A 234-amino-acid polypeptide reads, in one-letter code: UPF0173 metal-dependent hydrolase RHE_CH01853 (234 aa).

The protein belongs to the UPF0173 family.

This is UPF0173 metal-dependent hydrolase RHE_CH01853 from Rhizobium etli (strain ATCC 51251 / DSM 11541 / JCM 21823 / NBRC 15573 / CFN 42).